We begin with the raw amino-acid sequence, 240 residues long: Uridylate kinase (240 aa).

12-15 (KLSG) is a binding site for ATP. Residues 20 to 25 (GEKGFG) are involved in allosteric activation by GTP. Gly54 provides a ligand contact to UMP. Positions 55 and 59 each coordinate ATP. UMP-binding positions include Asp74 and 135–142 (TGSPYFST). Asn163, Tyr169, and Asp172 together coordinate ATP.

The protein belongs to the UMP kinase family. Homohexamer.

Its subcellular location is the cytoplasm. It carries out the reaction UMP + ATP = UDP + ADP. It participates in pyrimidine metabolism; CTP biosynthesis via de novo pathway; UDP from UMP (UMPK route): step 1/1. Its activity is regulated as follows. Allosterically activated by GTP. Inhibited by UTP. Catalyzes the reversible phosphorylation of UMP to UDP. This chain is Uridylate kinase, found in Limosilactobacillus reuteri (Lactobacillus reuteri).